The following is a 135-amino-acid chain: Retinol-binding protein 1 (135 aa).

Positions 22 to 32 (RALDVNVALRK) are important for interaction with STRA6. Residues K41, M63, and Q109 each contribute to the all-trans-retinol site.

Belongs to the calycin superfamily. Fatty-acid binding protein (FABP) family. Interacts (only as retinol-free apoprotein) with STRA6.

The protein resides in the cytoplasm. It is found in the lipid droplet. Its function is as follows. Cytoplasmic retinol-binding protein. Accepts retinol from the transport protein STRA6, and thereby contributes to retinol uptake, storage and retinoid homeostasis. This Rattus norvegicus (Rat) protein is Retinol-binding protein 1 (Rbp1).